The chain runs to 365 residues: Protein BIIDXI (365 aa).

A signal peptide spans 1-21; it reads MKEMGVIVLLLLHSFFYVAFC. Residues asparagine 48, asparagine 121, and asparagine 208 are each glycosylated (N-linked (GlcNAc...) asparagine).

As to quaternary structure, interacts with PME3. As to expression, mainly expressed in vascular tissues of roots, leaves, stamens and petals.

The protein localises to the secreted. It localises to the cell wall. In terms of biological role, together with At5g11420, acts as a positive regulator of PME3 activity during several developmental processes, including reproductive organ development, hypocotyls elongation, seed germination and endosperm (testa) rupture at the micropyle, probably by modulating the pectin methylation status in cell walls. Involved in the regulation of pectin methylation degree to modulate cell wall physiology during cell separation, hypocotyl growth and embryo development. Required during embryo development, especially to regulate homogalacturonans (HG) methyl esterification in endosperm cell walls, a process related to embryo bending. Also implicated in hypocotyl growth and gravitropic response via the regulation of auxin efflux. Also regulates cell wall pectin upon root-knot nematode Meloidogyne incognita infection. In Arabidopsis thaliana (Mouse-ear cress), this protein is Protein BIIDXI.